A 233-amino-acid chain; its full sequence is Zein-alpha PMS2 (233 aa).

The first 21 residues, methionine 1–alanine 21, serve as a signal peptide directing secretion.

It belongs to the zein family.

Zeins are major seed storage proteins. The polypeptide is Zein-alpha PMS2 (ZMPMS2) (Zea mays (Maize)).